We begin with the raw amino-acid sequence, 459 residues long: DNA polymerase subunit gamma-2 (459 aa).

Heterotrimer composed of a catalytic subunit and a homodimer of accessory subunits (POLG:POLG2).

It localises to the mitochondrion. The protein localises to the mitochondrion matrix. It is found in the mitochondrion nucleoid. In terms of biological role, accessory subunit of DNA polymerase gamma solely responsible for replication of mitochondrial DNA (mtDNA). Acts as an allosteric regulator of the holoenzyme activities. Enhances the polymerase activity and the processivity of POLG by increasing its interactions with the DNA template. Suppresses POLG exonucleolytic proofreading especially toward homopolymeric templates bearing mismatched termini. Binds to single-stranded DNA. The polypeptide is DNA polymerase subunit gamma-2 (Polg2) (Mus musculus (Mouse)).